Here is a 476-residue protein sequence, read N- to C-terminus: Aspartyl/glutamyl-tRNA(Asn/Gln) amidotransferase subunit B (476 aa).

It belongs to the GatB/GatE family. GatB subfamily. As to quaternary structure, heterotrimer of A, B and C subunits.

It catalyses the reaction L-glutamyl-tRNA(Gln) + L-glutamine + ATP + H2O = L-glutaminyl-tRNA(Gln) + L-glutamate + ADP + phosphate + H(+). It carries out the reaction L-aspartyl-tRNA(Asn) + L-glutamine + ATP + H2O = L-asparaginyl-tRNA(Asn) + L-glutamate + ADP + phosphate + 2 H(+). Its function is as follows. Allows the formation of correctly charged Asn-tRNA(Asn) or Gln-tRNA(Gln) through the transamidation of misacylated Asp-tRNA(Asn) or Glu-tRNA(Gln) in organisms which lack either or both of asparaginyl-tRNA or glutaminyl-tRNA synthetases. The reaction takes place in the presence of glutamine and ATP through an activated phospho-Asp-tRNA(Asn) or phospho-Glu-tRNA(Gln). The protein is Aspartyl/glutamyl-tRNA(Asn/Gln) amidotransferase subunit B of Thermosipho melanesiensis (strain DSM 12029 / CIP 104789 / BI429).